The sequence spans 67 residues: Vespin (67 aa).

A signal peptide spans 1 to 21 (MHPIIWELSHMVDLQAAAQKL).

As to expression, expressed by the venom gland.

It is found in the secreted. Shows contractile activity on isolated ileum smooth muscle. In Vespa magnifica (Hornet), this protein is Vespin.